Reading from the N-terminus, the 580-residue chain is mRNA cap guanine-N(7) methyltransferase (580 aa).

Composition is skewed to polar residues over residues 1-17 (MSGS…TSLI) and 25-53 (EATS…NSDL). Residues 1–222 (MSGSKQGSEK…PVEAQPYSRL (222 aa)) are disordered. Positions 54-67 (KVTENKPKNTEMKP) are enriched in basic and acidic residues. Positions 69-90 (DPNTNASTTENTPITTSNAQVS) are enriched in polar residues. Positions 102-154 (REPEEAQNRYDRYVPRVDNRRRGEPRVAEVRQDPRYAKYLRQDQEERRIRRPD) are enriched in basic and acidic residues. Over residues 191–214 (ESEENGDEQQGDDEEETPGNEEPV) the composition is skewed to acidic residues. The region spanning 271-579 (SPIYKLRNFN…FYLGFAFEKL (309 aa)) is the mRNA cap 0 methyltransferase domain. 280 to 281 (NN) serves as a coordination point for mRNA. S-adenosyl-L-methionine-binding residues include K284, C308, D330, D376, Q406, and Y411.

It belongs to the class I-like SAM-binding methyltransferase superfamily. mRNA cap 0 methyltransferase family.

It localises to the nucleus. It catalyses the reaction a 5'-end (5'-triphosphoguanosine)-ribonucleoside in mRNA + S-adenosyl-L-methionine = a 5'-end (N(7)-methyl 5'-triphosphoguanosine)-ribonucleoside in mRNA + S-adenosyl-L-homocysteine. Functionally, responsible for methylating the 5'-cap structure of mRNAs. This chain is mRNA cap guanine-N(7) methyltransferase (ABD1), found in Meyerozyma guilliermondii (strain ATCC 6260 / CBS 566 / DSM 6381 / JCM 1539 / NBRC 10279 / NRRL Y-324) (Yeast).